We begin with the raw amino-acid sequence, 130 residues long: Small ribosomal subunit protein uS8 (130 aa).

The protein belongs to the universal ribosomal protein uS8 family. Part of the 30S ribosomal subunit.

Functionally, one of the primary rRNA binding proteins, it binds directly to 16S rRNA central domain where it helps coordinate assembly of the platform of the 30S subunit. The chain is Small ribosomal subunit protein uS8 from Pyrococcus abyssi (strain GE5 / Orsay).